Reading from the N-terminus, the 177-residue chain is Probable chemoreceptor glutamine deamidase CheD (177 aa).

The protein belongs to the CheD family.

It catalyses the reaction L-glutaminyl-[protein] + H2O = L-glutamyl-[protein] + NH4(+). In terms of biological role, probably deamidates glutamine residues to glutamate on methyl-accepting chemotaxis receptors (MCPs), playing an important role in chemotaxis. The chain is Probable chemoreceptor glutamine deamidase CheD from Pseudomonas fluorescens (strain SBW25).